The primary structure comprises 649 residues: Solute carrier family 22 member 16 (649 aa).

Residues 19–39 (FQIVLYLICAYQSLSCGIHYL) traverse the membrane as a helical segment. N-linked (GlcNAc...) asparagine glycosylation is found at asparagine 65 and asparagine 108. The next 5 membrane-spanning stretches (helical) occupy residues 156 to 176 (MIQP…SYLS), 190 to 210 (IGVF…SFMI), 214 to 234 (FLVM…MEII), 244 to 264 (IHLN…SYLL), and 268 to 288 (WLYQ…CWML). Asparagine 315 carries N-linked (GlcNAc...) asparagine glycosylation. A run of 6 helical transmembrane segments spans residues 356–376 (AKMT…YYMF), 389–409 (LYLL…CIWL), 417–437 (TMLL…VMPS), 445–465 (MVAL…YLYT), 475–495 (CLAV…IPFT), and 501–521 (VWIF…GLLS). A compositionally biased stretch (polar residues) spans 530–544 (TPMKSTWETTEQQVP). Disordered regions lie at residues 530–560 (TPMK…SFER) and 579–649 (SPDA…LGGF).

It belongs to the major facilitator (TC 2.A.1) superfamily. Organic cation transporter (TC 2.A.1.19) family.

The protein resides in the cell membrane. It catalyses the reaction (R)-carnitine(in) = (R)-carnitine(out). It carries out the reaction spermidine(in) = spermidine(out). In terms of biological role, facilitative organic cation transporter that mediates the transport of carnitine as well as the polyamine spermidine. Mediates the partially Na(+)-dependent bidirectional transport of carnitine. May mediate L-carnitine secretion from testis epididymal epithelium into the lumen which is involved in the maturation of spermatozoa. This is Solute carrier family 22 member 16 from Mus musculus (Mouse).